The following is a 354-amino-acid chain: UDP-N-acetylglucosamine--N-acetylmuramyl-(pentapeptide) pyrophosphoryl-undecaprenol N-acetylglucosamine transferase (354 aa).

UDP-N-acetyl-alpha-D-glucosamine contacts are provided by residues 15–17, Asn127, Arg163, Ser191, Ile242, 261–266, and Gln286; these read TGG and ALTVSE.

Belongs to the glycosyltransferase 28 family. MurG subfamily.

It is found in the cell inner membrane. The enzyme catalyses di-trans,octa-cis-undecaprenyl diphospho-N-acetyl-alpha-D-muramoyl-L-alanyl-D-glutamyl-meso-2,6-diaminopimeloyl-D-alanyl-D-alanine + UDP-N-acetyl-alpha-D-glucosamine = di-trans,octa-cis-undecaprenyl diphospho-[N-acetyl-alpha-D-glucosaminyl-(1-&gt;4)]-N-acetyl-alpha-D-muramoyl-L-alanyl-D-glutamyl-meso-2,6-diaminopimeloyl-D-alanyl-D-alanine + UDP + H(+). The protein operates within cell wall biogenesis; peptidoglycan biosynthesis. Its function is as follows. Cell wall formation. Catalyzes the transfer of a GlcNAc subunit on undecaprenyl-pyrophosphoryl-MurNAc-pentapeptide (lipid intermediate I) to form undecaprenyl-pyrophosphoryl-MurNAc-(pentapeptide)GlcNAc (lipid intermediate II). In Pasteurella multocida (strain Pm70), this protein is UDP-N-acetylglucosamine--N-acetylmuramyl-(pentapeptide) pyrophosphoryl-undecaprenol N-acetylglucosamine transferase.